A 393-amino-acid polypeptide reads, in one-letter code: Ninja-family protein 1 (393 aa).

Disordered stretches follow at residues 1–27 (MEGFSRDLLCGIGKGDAPPPEKRPGQL) and 155–200 (NDDW…KEMN). Basic and acidic residues predominate over residues 156-170 (DDWKKRKEAQSLKRL).

It belongs to the Ninja family.

Its subcellular location is the nucleus. In Zea mays (Maize), this protein is Ninja-family protein 1.